The following is a 174-amino-acid chain: Variant surface antigen B (174 aa).

The first 29 residues, 1-29 (MKKSIFSKKLLVSFGSLVALASIPLIAIS), serve as a signal peptide directing secretion. A lipid anchor (N-palmitoyl cysteine) is attached at C30. C30 carries the S-diacylglycerol cysteine lipid modification. The segment at 32 to 174 (QTNTDKSQQP…SQDSGNGSTK (143 aa)) is disordered. Low complexity predominate over residues 38-49 (SQQPGSGSSTSG). The span at 50–75 (GQSGTGLGSGTTTGGQSGTTTGGRSG) shows a compositional bias: gly residues. The segment covering 76–97 (SGSSSSTTGGQTGTGSDSQDSG) has biased composition (low complexity). 7 repeat units span residues 88-99 (GTGSDSQDSGAK), 100-111 (GTGSDSQDSGAK), 112-123 (GTGSDSQDSGAK), 124-135 (GTGSDSQDSGAK), 136-147 (GTGSDSQDSGAK), 148-159 (GTGSDSQDSGAK), and 160-171 (GTGSDSQDSGNG). Positions 88–171 (GTGSDSQDSG…GSDSQDSGNG (84 aa)) are 7 X 12 AA tandem repeats. A compositionally biased stretch (polar residues) spans 102–174 (GSDSQDSGAK…SQDSGNGSTK (73 aa)).

It is found in the cell membrane. Responsible for the antigenic diversity for host adaptation. This chain is Variant surface antigen B (vlpB), found in Mesomycoplasma hyorhinis (Mycoplasma hyorhinis).